A 477-amino-acid chain; its full sequence is Bifunctional protein HldE (477 aa).

Positions 1 to 319 (MKITLPPFDQ…RALQEQEQSG (319 aa)) are ribokinase. Residue 195-198 (NLAE) coordinates ATP. Asp264 is an active-site residue. A cytidylyltransferase region spans residues 344-477 (MTNGCFDLLH…IERMQSAPDT (134 aa)).

In the N-terminal section; belongs to the carbohydrate kinase PfkB family. It in the C-terminal section; belongs to the cytidylyltransferase family. In terms of assembly, homodimer.

The catalysed reaction is D-glycero-beta-D-manno-heptose 7-phosphate + ATP = D-glycero-beta-D-manno-heptose 1,7-bisphosphate + ADP + H(+). It carries out the reaction D-glycero-beta-D-manno-heptose 1-phosphate + ATP + H(+) = ADP-D-glycero-beta-D-manno-heptose + diphosphate. It functions in the pathway nucleotide-sugar biosynthesis; ADP-L-glycero-beta-D-manno-heptose biosynthesis; ADP-L-glycero-beta-D-manno-heptose from D-glycero-beta-D-manno-heptose 7-phosphate: step 1/4. Its pathway is nucleotide-sugar biosynthesis; ADP-L-glycero-beta-D-manno-heptose biosynthesis; ADP-L-glycero-beta-D-manno-heptose from D-glycero-beta-D-manno-heptose 7-phosphate: step 3/4. Functionally, catalyzes the phosphorylation of D-glycero-D-manno-heptose 7-phosphate at the C-1 position to selectively form D-glycero-beta-D-manno-heptose-1,7-bisphosphate. In terms of biological role, catalyzes the ADP transfer from ATP to D-glycero-beta-D-manno-heptose 1-phosphate, yielding ADP-D-glycero-beta-D-manno-heptose. This is Bifunctional protein HldE from Alkalilimnicola ehrlichii (strain ATCC BAA-1101 / DSM 17681 / MLHE-1).